The primary structure comprises 1005 residues: Probable beta-galactosidase A (1005 aa).

The signal sequence occupies residues 1-18 (MKLLSVAAVALLAAQAAG). The substrate site is built by Tyr96, Asn140, Ala141, and Glu142. Asn156 carries an N-linked (GlcNAc...) asparagine glycan. Residue Asn199 participates in substrate binding. Glu200 acts as the Proton donor in catalysis. The cysteines at positions 205 and 206 are disulfide-linked. Substrate is bound at residue Tyr260. A disulfide bridge connects residues Cys266 and Cys315. The active-site Nucleophile is the Glu298. Tyr364 serves as a coordination point for substrate. Residues Asn373, Asn402, Asn453, Asn478, Asn522, Asn622, Asn760, Asn777, Asn805, and Asn914 are each glycosylated (N-linked (GlcNAc...) asparagine).

The protein belongs to the glycosyl hydrolase 35 family.

The protein resides in the secreted. The enzyme catalyses Hydrolysis of terminal non-reducing beta-D-galactose residues in beta-D-galactosides.. Cleaves beta-linked terminal galactosyl residues from gangliosides, glycoproteins, and glycosaminoglycans. In Aspergillus flavus (strain ATCC 200026 / FGSC A1120 / IAM 13836 / NRRL 3357 / JCM 12722 / SRRC 167), this protein is Probable beta-galactosidase A (lacA).